The primary structure comprises 401 residues: Argininosuccinate synthase (401 aa).

Residues 9 to 17 (AYSGGLDTS) and Ala-36 contribute to the ATP site. L-citrulline-binding residues include Tyr-87 and Ser-92. Gly-117 is an ATP binding site. The L-aspartate site is built by Thr-119, Asn-123, and Asp-124. Asn-123 provides a ligand contact to L-citrulline. L-citrulline contacts are provided by Arg-127, Ser-176, Ser-185, Glu-261, and Tyr-273.

The protein belongs to the argininosuccinate synthase family. Type 1 subfamily. Homotetramer.

Its subcellular location is the cytoplasm. It carries out the reaction L-citrulline + L-aspartate + ATP = 2-(N(omega)-L-arginino)succinate + AMP + diphosphate + H(+). It functions in the pathway amino-acid biosynthesis; L-arginine biosynthesis; L-arginine from L-ornithine and carbamoyl phosphate: step 2/3. In Syntrophobacter fumaroxidans (strain DSM 10017 / MPOB), this protein is Argininosuccinate synthase.